Consider the following 906-residue polypeptide: Ribonucleoside-diphosphate reductase large subunit-like protein (906 aa).

2 disordered regions span residues 1-70 (MNPA…AGNT) and 89-129 (VSWR…LSTF). The span at 98–109 (PDGTPSVLSLTR) shows a compositional bias: polar residues.

It belongs to the ribonucleoside diphosphate reductase large chain family.

It localises to the virion. The protein localises to the host cytoplasm. Functionally, does not possess a ribonucleotide reductase activity. Betaherpesviruses probably use another strategy to expand the dNTP pool in a quiescent host cell. This Homo sapiens (Human) protein is Ribonucleoside-diphosphate reductase large subunit-like protein.